The chain runs to 151 residues: Melatonin receptor type 1C (151 aa).

Residues 1-13 (CHSLRYDRLYSRR) are Cytoplasmic-facing. The chain crosses the membrane as a helical span at residues 14–34 (NTCLYLLLTWMLTALATVPNF). Residues 35–58 (LVGSLKYDPRVFSCTFTQTASSSY) lie on the Extracellular side of the membrane. The helical transmembrane segment at 59–79 (TVCVVLIHFLVPLGVVSFCYL) threads the bilayer. At 80–109 (RIWTLVIRVKGRVRPNPKVRAADLRNFLTM) the chain is on the cytoplasmic side. The chain crosses the membrane as a helical span at residues 110–130 (FVVFVLFAVCWAPLNFIGLAV). At 131-143 (AINPAKVAPNIPE) the chain is on the extracellular side. A helical membrane pass occupies residues 144–151 (WLFVTSYF).

This sequence belongs to the G-protein coupled receptor 1 family.

The protein localises to the cell membrane. Functionally, high affinity receptor for melatonin. The activity of this receptor is mediated by pertussis toxin sensitive G proteins that inhibits adenylate cyclase activity. The polypeptide is Melatonin receptor type 1C (mtnr1c) (Danio rerio (Zebrafish)).